Reading from the N-terminus, the 147-residue chain is Myoglobin (147 aa).

The Globin domain maps to 2–141; that stretch reads ADFDAVLKFW…FIADMDANYK (140 aa). Nitrite is bound at residue His-60. His-60 lines the O2 pocket. Residue His-89 coordinates heme b.

It belongs to the globin family. In terms of assembly, monomeric.

It is found in the cytoplasm. The protein resides in the sarcoplasm. The catalysed reaction is Fe(III)-heme b-[protein] + nitric oxide + H2O = Fe(II)-heme b-[protein] + nitrite + 2 H(+). It carries out the reaction H2O2 + AH2 = A + 2 H2O. Its function is as follows. Monomeric heme protein which primary function is to store oxygen and facilitate its diffusion within muscle tissues. Reversibly binds oxygen through a pentacoordinated heme iron and enables its timely and efficient release as needed during periods of heightened demand. Depending on the oxidative conditions of tissues and cells, and in addition to its ability to bind oxygen, it also has a nitrite reductase activity whereby it regulates the production of bioactive nitric oxide. Under stress conditions, like hypoxia and anoxia, it also protects cells against reactive oxygen species thanks to its pseudoperoxidase activity. The protein is Myoglobin (mb) of Scomber japonicus (Chub mackerel).